A 314-amino-acid chain; its full sequence is 2,3-dihydroxyphenylpropionate/2,3-dihydroxicinnamic acid 1,2-dioxygenase (314 aa).

Residue H115 is the Proton donor of the active site. H179 (proton acceptor) is an active-site residue.

It belongs to the LigB/MhpB extradiol dioxygenase family. As to quaternary structure, homotetramer. Fe(2+) serves as cofactor.

The enzyme catalyses 3-(2,3-dihydroxyphenyl)propanoate + O2 = (2Z,4E)-2-hydroxy-6-oxonona-2,4-dienedioate + H(+). It carries out the reaction (2E)-3-(2,3-dihydroxyphenyl)prop-2-enoate + O2 = (2Z,4E,7E)-2-hydroxy-6-oxonona-2,4,7-trienedioate + H(+). Its pathway is aromatic compound metabolism; 3-phenylpropanoate degradation. Its function is as follows. Catalyzes the non-heme iron(II)-dependent oxidative cleavage of 2,3-dihydroxyphenylpropionic acid and 2,3-dihydroxicinnamic acid into 2-hydroxy-6-ketononadienedioate and 2-hydroxy-6-ketononatrienedioate, respectively. This chain is 2,3-dihydroxyphenylpropionate/2,3-dihydroxicinnamic acid 1,2-dioxygenase, found in Cupriavidus pinatubonensis (strain JMP 134 / LMG 1197) (Cupriavidus necator (strain JMP 134)).